The primary structure comprises 105 residues: Heat shock protein HspQ (105 aa).

The protein belongs to the HspQ family.

It is found in the cytoplasm. Involved in the degradation of certain denaturated proteins, including DnaA, during heat shock stress. This chain is Heat shock protein HspQ, found in Baumannia cicadellinicola subsp. Homalodisca coagulata.